The primary structure comprises 236 residues: uncharacterized protein (236 aa).

The ABC transporter domain occupies 4 to 225 (LLEASIEQAG…TGLEGQSLLD (222 aa)). Residue 38–45 (GANGAGKS) participates in ATP binding.

Belongs to the ABC transporter superfamily.

This is an uncharacterized protein from Bacillus subtilis (strain 168).